Here is a 194-residue protein sequence, read N- to C-terminus: Adenylate kinase (194 aa).

12–17 (GSGKTT) contributes to the ATP binding site. The NMP stretch occupies residues 34–63 (STGDLLREEVKKGTPLGATIASFIDNGQLV). AMP-binding positions include Thr-35, Arg-40, 61–63 (QLV), 88–91 (GFPR), and Gln-95. An LID region spans residues 130-136 (GRARGAD). Residue Arg-131 coordinates ATP. AMP is bound by residues Arg-133 and Arg-145. Residue Arg-173 coordinates ATP.

It belongs to the adenylate kinase family. Monomer.

Its subcellular location is the cytoplasm. The enzyme catalyses AMP + ATP = 2 ADP. Its pathway is purine metabolism; AMP biosynthesis via salvage pathway; AMP from ADP: step 1/1. Catalyzes the reversible transfer of the terminal phosphate group between ATP and AMP. Plays an important role in cellular energy homeostasis and in adenine nucleotide metabolism. The sequence is that of Adenylate kinase from Nitratiruptor sp. (strain SB155-2).